Consider the following 237-residue polypeptide: MLSALLIDDERFAREELAELLAESGQIEVIGQASNAIEGLKKINQLKPDVVFLDIQMPQISGIELLSMLDPETMPEVVFVTAYDQYALQAFEDNAFDYLLKPVDTERLAKTVQRLLRQHKKSDYSPLTQPSLDQIPCTGLNRIVLLPINEVEFAYSDISGVNVQTAQQKATSQLTLKVLEEKTALVRCHRQYLVNLKAIREIKLLENGLAEMITHAGHKVPVSRRYLKELKEMLGFY.

The Response regulatory domain occupies 3-116; that stretch reads SALLIDDERF…RLAKTVQRLL (114 aa). D54 carries the 4-aspartylphosphate modification. Residues 135–236 form the HTH LytTR-type domain; it reads IPCTGLNRIV…LKELKEMLGF (102 aa).

This is an uncharacterized protein from Vibrio cholerae serotype O1 (strain ATCC 39315 / El Tor Inaba N16961).